A 421-amino-acid chain; its full sequence is Testin (421 aa).

Residues 92–199 (MILTNPVAAK…GDVKLPCEMD (108 aa)) enclose the PET domain. A disordered region spans residues 133–164 (EKQPVAGSEGAQYRKKQLAKQLPAHDQDPSKC). The segment covering 155 to 164 (PAHDQDPSKC) has biased composition (basic and acidic residues). LIM zinc-binding domains are found at residues 234-297 (YSCY…CDSE), 299-359 (PRCA…NHAV), and 362-421 (QGCH…KMMS).

This sequence belongs to the prickle / espinas / testin family. As to quaternary structure, interacts via LIM domain 1 with ZYX. Interacts (via LIM domain 3) with ENAH and VASP. Interacts with ALKBH4, talin, actin, alpha-actinin, GRIP1 and PXN. Interacts (via LIM domain 2) with ACTL7A (via N-terminus). Heterodimer with ACTL7A; the heterodimer interacts with ENAH to form a heterotrimer.

It is found in the cytoplasm. Its subcellular location is the cell junction. The protein localises to the focal adhesion. Functionally, scaffold protein that may play a role in cell adhesion, cell spreading and in the reorganization of the actin cytoskeleton. Plays a role in the regulation of cell proliferation. May act as a tumor suppressor. In Papio anubis (Olive baboon), this protein is Testin (TES).